The sequence spans 125 residues: Oxytocin-neurophysin 1 (125 aa).

The signal sequence occupies residues 1 to 19; that stretch reads MAGPSLACCLLGLLALTSA. A disulfide bridge links C20 with C25. G28 bears the Glycine amide mark. Disulfide bonds link C41–C85, C44–C58, C52–C75, C59–C65, C92–C104, C98–C116, and C105–C110.

It belongs to the vasopressin/oxytocin family. As to quaternary structure, interacts with oxytocin receptor (Ki=1.5 nM). Interacts with vasopressin V1aR/AVPR1A (Ki=37 nM), V1bR/AVPR1B (Ki=222 nM), and V2R/AVPR2 receptors (Ki=823 nM).

Functionally, neurophysin 1 specifically binds oxytocin. Oxytocin causes contraction of the smooth muscle of the uterus and of the mammary gland. Acts by binding to oxytocin receptor (OXTR). This Sus scrofa (Pig) protein is Oxytocin-neurophysin 1 (OXT).